A 217-amino-acid polypeptide reads, in one-letter code: Thiopurine S-methyltransferase (217 aa).

S-adenosyl-L-methionine is bound by residues tryptophan 11, leucine 46, glutamate 67, and arginine 122.

It belongs to the class I-like SAM-binding methyltransferase superfamily. TPMT family.

The protein localises to the cytoplasm. The catalysed reaction is S-adenosyl-L-methionine + a thiopurine = S-adenosyl-L-homocysteine + a thiopurine S-methylether.. The sequence is that of Thiopurine S-methyltransferase from Vibrio atlanticus (strain LGP32) (Vibrio splendidus (strain Mel32)).